Consider the following 115-residue polypeptide: Large ribosomal subunit protein bL20 (115 aa).

The protein belongs to the bacterial ribosomal protein bL20 family.

In terms of biological role, binds directly to 23S ribosomal RNA and is necessary for the in vitro assembly process of the 50S ribosomal subunit. It is not involved in the protein synthesizing functions of that subunit. The protein is Large ribosomal subunit protein bL20 of Myxococcus xanthus (strain DK1622).